A 327-amino-acid polypeptide reads, in one-letter code: Glycerol-3-phosphate dehydrogenase [NAD(P)+] (327 aa).

NADPH is bound by residues Trp13, His33, and Lys102. Sn-glycerol 3-phosphate is bound by residues Lys102, Gly130, and Ser132. Ala134 provides a ligand contact to NADPH. Residues Lys185, Asp238, Ser248, Arg249, and Asn250 each contribute to the sn-glycerol 3-phosphate site. The active-site Proton acceptor is the Lys185. Position 249 (Arg249) interacts with NADPH. Glu275 contacts NADPH.

The protein belongs to the NAD-dependent glycerol-3-phosphate dehydrogenase family.

It localises to the cytoplasm. The enzyme catalyses sn-glycerol 3-phosphate + NAD(+) = dihydroxyacetone phosphate + NADH + H(+). It carries out the reaction sn-glycerol 3-phosphate + NADP(+) = dihydroxyacetone phosphate + NADPH + H(+). It functions in the pathway membrane lipid metabolism; glycerophospholipid metabolism. Its function is as follows. Catalyzes the reduction of the glycolytic intermediate dihydroxyacetone phosphate (DHAP) to sn-glycerol 3-phosphate (G3P), the key precursor for phospholipid synthesis. The chain is Glycerol-3-phosphate dehydrogenase [NAD(P)+] from Vesicomyosocius okutanii subsp. Calyptogena okutanii (strain HA).